The primary structure comprises 201 residues: Potassium-transporting ATPase KdpC subunit (201 aa).

Residues 9 to 29 form a helical membrane-spanning segment; that stretch reads ILVMLALTLITGLLYPLAMTV. Polar residues-rich tracts occupy residues 73–84 and 91–101; these read TTAADPNDSTKT and AANSSGSNLGP. Residues 73 to 103 are disordered; the sequence is TTAADPNDSTKTVPAPYNAANSSGSNLGPTS.

This sequence belongs to the KdpC family. In terms of assembly, the system is composed of three essential subunits: KdpA, KdpB and KdpC.

It localises to the cell inner membrane. Its function is as follows. Part of the high-affinity ATP-driven potassium transport (or Kdp) system, which catalyzes the hydrolysis of ATP coupled with the electrogenic transport of potassium into the cytoplasm. This subunit acts as a catalytic chaperone that increases the ATP-binding affinity of the ATP-hydrolyzing subunit KdpB by the formation of a transient KdpB/KdpC/ATP ternary complex. The polypeptide is Potassium-transporting ATPase KdpC subunit (Bradyrhizobium sp. (strain BTAi1 / ATCC BAA-1182)).